Here is a 357-residue protein sequence, read N- to C-terminus: Protein Wnt-9b (357 aa).

The first 22 residues, 1 to 22 (MRPPPALALAGLCLLALPAAAA), serve as a signal peptide directing secretion. 11 disulfides stabilise this stretch: C89-C100, C135-C143, C145-C162, C210-C224, C212-C219, C291-C316, C305-C311, C315-C355, C331-C346, C333-C343, and C338-C339. N99 is a glycosylation site (N-linked (GlcNAc...) asparagine). S216 carries the O-palmitoleoyl serine; by PORCN lipid modification.

It belongs to the Wnt family. In terms of assembly, forms a soluble 1:1 complex with AFM; this prevents oligomerization and is required for prolonged biological activity. The complex with AFM may represent the physiological form in body fluids. Component of the Wnt-Fzd-LRP5-LRP6 signaling complex that contains a WNT protein, a FZD protein and LRP5 or LRP6. Interacts directly in the complex with LRP6. Interacts with PKD1 (via extracellular domain). Palmitoleoylation is required for efficient binding to frizzled receptors. Depalmitoleoylation leads to Wnt signaling pathway inhibition. As to expression, moderately expressed in fetal kidney and adult kidney. Also found in brain.

The protein resides in the secreted. The protein localises to the extracellular space. Its subcellular location is the extracellular matrix. In terms of biological role, ligand for members of the frizzled family of seven transmembrane receptors. Functions in the canonical Wnt/beta-catenin signaling pathway. Required for normal embryonic kidney development, and for normal development of the urogenital tract, including uterus and part of the oviduct and the upper vagina in females, and epididymis and vas deferens in males. Activates a signaling cascade in the metanephric mesenchyme that induces tubulogenesis. Acts upstream of WNT4 in the signaling pathways that mediate development of kidney tubules and the Muellerian ducts. Plays a role in cranofacial development and is required for normal fusion of the palate during embryonic development. The protein is Protein Wnt-9b (WNT9B) of Homo sapiens (Human).